Reading from the N-terminus, the 547-residue chain is CAP-Gly domain-containing linker protein 3 (547 aa).

The disordered stretch occupies residues 1–49 (MTKTDPAPMAPPPRGEEEEEEEEDEPVPEAPSPTQERRQKPVVHPSAPA). The span at 16 to 27 (EEEEEEEEDEPV) shows a compositional bias: acidic residues. 3 ANK repeats span residues 117 to 158 (TDMT…LRSR), 160 to 191 (TNMN…VVNS), and 197 to 229 (NHGS…LRNR). A CAP-Gly 1 domain is found at 314 to 356 (GTTEFASGQWVGVELDEPEGKNDGSVGGVRYFICPPKQGLFAS). The disordered stretch occupies residues 365 to 413 (DAPPSSVTSTPRTPRMDFSRVTGKGRREHKGKKKTPSSPSLGSLQQRDG). Residues 367 to 377 (PPSSVTSTPRT) show a composition bias toward low complexity. A Phosphothreonine modification is found at Thr-374. A compositionally biased stretch (basic residues) spans 387–399 (GKGRREHKGKKKT). The span at 400-410 (PSSPSLGSLQQ) shows a compositional bias: polar residues. Ser-401 bears the Phosphoserine mark. Positions 436–478 (GKTDFAPGYWYGIELDQPTGKHDGSVFGVRYFTCPPRHGVFAP) constitute a CAP-Gly 2 domain. A goLD region spans residues 488–547 (STDSPGDSVGAKKVHQVTMTQPKRTFTTVRTPKDIASENSISRLLFCCWFPWMLRAEMQS). Residues Cys-534 and Cys-535 are each lipidated (S-palmitoyl cysteine).

Homodimer. Interacts with AKT1 and AKT2; when AKT1 and AKT2 are phosphorylated and activated, affinity is higher for AKT2. Interacts with ZDHHC13 (via ANK repeats). Interacts with ZDHHC17 (via ANK repeats). In terms of processing, palmitoylation by ZDHHC17 regulates association with the plasma membrane.

Its subcellular location is the cell membrane. The protein resides in the cytoplasm. It is found in the golgi apparatus. The protein localises to the golgi stack. Its function is as follows. Functions as a cytoplasmic linker protein. Involved in TGN-endosome dynamics. May modulate the cellular compartmentalization of AKT kinase family and promote its cell membrane localization, thereby playing a role in glucose transport in adipocytes. This is CAP-Gly domain-containing linker protein 3 (CLIP3) from Homo sapiens (Human).